The sequence spans 98 residues: NADH-ubiquinone oxidoreductase chain 4L (98 aa).

The next 3 helical transmembrane spans lie at 1 to 21 (MIPT…GMLT), 27 to 47 (VASL…TALI), and 61 to 81 (IILL…LISI).

It belongs to the complex I subunit 4L family. As to quaternary structure, core subunit of respiratory chain NADH dehydrogenase (Complex I) which is composed of 45 different subunits.

Its subcellular location is the mitochondrion inner membrane. The enzyme catalyses a ubiquinone + NADH + 5 H(+)(in) = a ubiquinol + NAD(+) + 4 H(+)(out). In terms of biological role, core subunit of the mitochondrial membrane respiratory chain NADH dehydrogenase (Complex I) which catalyzes electron transfer from NADH through the respiratory chain, using ubiquinone as an electron acceptor. Part of the enzyme membrane arm which is embedded in the lipid bilayer and involved in proton translocation. In Macaca sylvanus (Barbary macaque), this protein is NADH-ubiquinone oxidoreductase chain 4L (MT-ND4L).